Reading from the N-terminus, the 924-residue chain is Ubiquitin carboxyl-terminal hydrolase 15 (924 aa).

The Zn(2+) site is built by Cys-130, Cys-133, Cys-141, Cys-144, Cys-150, Cys-154, His-163, and Cys-167. The segment at 130 to 167 (CARCFGPAKTRCSRCKSVRYCSGKCQIIHWRVAHKDEC) adopts an MYND-type zinc-finger fold. Polar residues predominate over residues 226–236 (DITPQINTQGR). 2 disordered regions span residues 226–301 (DITP…VDSS) and 317–366 (SHKH…TSKK). The span at 247–256 (ANRESCRRDS) shows a compositional bias: basic and acidic residues. Polar residues predominate over residues 331 to 362 (GCPNTQYPSNGTRTATLPRTGINKSGEQSCTE). In terms of domain architecture, USP spans 438-744 (RGLVNCGNSC…GAYMLFYMRS (307 aa)). The active-site Nucleophile is the Cys-447. The Proton acceptor role is filled by His-703. The segment at 750–793 (RGEHNGKAPVHHSQPRNEMKEQRKPVNRFKPRADHKNTESSSSE) is disordered. A compositionally biased stretch (basic and acidic residues) spans 764–773 (PRNEMKEQRK).

It belongs to the peptidase C19 family. Interacts with DA1. As to expression, highly expressed in rosette leaves and inflorescence. Expressed at low levels in cotyledons, stems, cauline leaves and siliques.

The protein resides in the cytoplasm. Its subcellular location is the nucleus. The catalysed reaction is Thiol-dependent hydrolysis of ester, thioester, amide, peptide and isopeptide bonds formed by the C-terminal Gly of ubiquitin (a 76-residue protein attached to proteins as an intracellular targeting signal).. Recognizes and hydrolyzes the peptide bond at the C-terminal Gly of ubiquitin. Involved in the processing of poly-ubiquitin precursors as well as that of ubiquitinated proteins. Involved in the regulation of organ size. Acts as a positive regulator of cell proliferation. Possesses deubiquitinating enzyme activity in vitro. The enzyme activity of UBP15 is required for its function in regulation of cell proliferation. Functions antagonistically in a common pathway with DA1 to regulate seed size. Acts maternally to regulate seed size by promoting cell proliferation in the integuments of ovules and developing seeds. Functions independently of DA2 and BB. The protein is Ubiquitin carboxyl-terminal hydrolase 15 of Arabidopsis thaliana (Mouse-ear cress).